A 264-amino-acid polypeptide reads, in one-letter code: S-adenosylmethionine decarboxylase proenzyme (264 aa).

Residue Ser-113 is the Schiff-base intermediate with substrate; via pyruvic acid of the active site. Ser-113 bears the Pyruvic acid (Ser); by autocatalysis mark. The active-site Proton acceptor; for processing activity is the His-118. The active-site Proton donor; for catalytic activity is Cys-141.

It belongs to the prokaryotic AdoMetDC family. Type 2 subfamily. Heterooctamer of four alpha and four beta chains arranged as a tetramer of alpha/beta heterodimers. Pyruvate is required as a cofactor. Post-translationally, is synthesized initially as an inactive proenzyme. Formation of the active enzyme involves a self-maturation process in which the active site pyruvoyl group is generated from an internal serine residue via an autocatalytic post-translational modification. Two non-identical subunits are generated from the proenzyme in this reaction, and the pyruvate is formed at the N-terminus of the alpha chain, which is derived from the carboxyl end of the proenzyme. The post-translation cleavage follows an unusual pathway, termed non-hydrolytic serinolysis, in which the side chain hydroxyl group of the serine supplies its oxygen atom to form the C-terminus of the beta chain, while the remainder of the serine residue undergoes an oxidative deamination to produce ammonia and the pyruvoyl group blocking the N-terminus of the alpha chain.

The catalysed reaction is S-adenosyl-L-methionine + H(+) = S-adenosyl 3-(methylsulfanyl)propylamine + CO2. The protein operates within amine and polyamine biosynthesis; S-adenosylmethioninamine biosynthesis; S-adenosylmethioninamine from S-adenosyl-L-methionine: step 1/1. In terms of biological role, catalyzes the decarboxylation of S-adenosylmethionine to S-adenosylmethioninamine (dcAdoMet), the propylamine donor required for the synthesis of the polyamines spermine and spermidine from the diamine putrescine. This Hahella chejuensis (strain KCTC 2396) protein is S-adenosylmethionine decarboxylase proenzyme.